The following is a 208-amino-acid chain: Large ribosomal subunit protein uL4 (208 aa).

Residues 46 to 97 are disordered; the sequence is QGTHKTKTRAEVRGGGKKPYRQKGTGNARQGSSRSPIMVGGGTIFGPQPRSY. Residues 69-80 are compositionally biased toward polar residues; sequence GTGNARQGSSRS.

It belongs to the universal ribosomal protein uL4 family. In terms of assembly, part of the 50S ribosomal subunit.

One of the primary rRNA binding proteins, this protein initially binds near the 5'-end of the 23S rRNA. It is important during the early stages of 50S assembly. It makes multiple contacts with different domains of the 23S rRNA in the assembled 50S subunit and ribosome. In terms of biological role, forms part of the polypeptide exit tunnel. The protein is Large ribosomal subunit protein uL4 of Chlorobaculum parvum (strain DSM 263 / NCIMB 8327) (Chlorobium vibrioforme subsp. thiosulfatophilum).